Reading from the N-terminus, the 428-residue chain is Putative zinc metalloprotease SACOL1281 (428 aa).

His-21 serves as a coordination point for Zn(2+). Residue Glu-22 is part of the active site. His-25 is a binding site for Zn(2+). 4 helical membrane passes run 172–194 (FLTL…IGLA), 309–331 (GSTY…GFSF), 352–374 (IISL…LIPI), and 401–420 (TTII…LVTW). The region spanning 186 to 269 (ALVLFIGLAY…TKSVELTPKK (84 aa)) is the PDZ domain.

It belongs to the peptidase M50B family. Zn(2+) serves as cofactor.

It localises to the cell membrane. The protein is Putative zinc metalloprotease SACOL1281 of Staphylococcus aureus (strain COL).